The chain runs to 629 residues: 1-deoxy-D-xylulose-5-phosphate synthase (629 aa).

Thiamine diphosphate is bound by residues His-72 and Gly-113–Ser-115. Position 144 (Asp-144) interacts with Mg(2+). Residues Gly-145–Ala-146, Asn-173, Tyr-284, and Glu-366 contribute to the thiamine diphosphate site. Residue Asn-173 participates in Mg(2+) binding.

The protein belongs to the transketolase family. DXPS subfamily. As to quaternary structure, homodimer. Mg(2+) serves as cofactor. Requires thiamine diphosphate as cofactor.

It carries out the reaction D-glyceraldehyde 3-phosphate + pyruvate + H(+) = 1-deoxy-D-xylulose 5-phosphate + CO2. It functions in the pathway metabolic intermediate biosynthesis; 1-deoxy-D-xylulose 5-phosphate biosynthesis; 1-deoxy-D-xylulose 5-phosphate from D-glyceraldehyde 3-phosphate and pyruvate: step 1/1. Catalyzes the acyloin condensation reaction between C atoms 2 and 3 of pyruvate and glyceraldehyde 3-phosphate to yield 1-deoxy-D-xylulose-5-phosphate (DXP). This Halalkalibacterium halodurans (strain ATCC BAA-125 / DSM 18197 / FERM 7344 / JCM 9153 / C-125) (Bacillus halodurans) protein is 1-deoxy-D-xylulose-5-phosphate synthase.